Here is a 770-residue protein sequence, read N- to C-terminus: Tripartite terminase subunit 1 (770 aa).

The C3H1-type zinc finger occupies 199–227 (CAICFEELCITANQGETLHRRLLGCICDH). 675–682 (FTSVFHCG) contributes to the ATP binding site.

This sequence belongs to the herpesviridae TRM1 protein family. As to quaternary structure, associates with TRM2 and TRM3 to form the tripartite terminase complex. Interacts with portal protein.

It is found in the host nucleus. In terms of biological role, component of the molecular motor that translocates viral genomic DNA in empty capsid during DNA packaging. Forms a tripartite terminase complex together with TRM2 and TRM3 in the host cytoplasm. Once the complex reaches the host nucleus, it interacts with the capsid portal vertex. This portal forms a ring in which genomic DNA is translocated into the capsid. TRM1 carries an endonuclease activity that plays an important role for the cleavage of concatemeric viral DNA into unit length genomes. The polypeptide is Tripartite terminase subunit 1 (Varicella-zoster virus (strain Dumas) (HHV-3)).